The following is a 450-amino-acid chain: Signal recognition particle 54 kDa protein (450 aa).

Residues 107-114 (GIQGSGKT), 188-192 (DTAGR), and 247-250 (TKLD) contribute to the GTP site.

It belongs to the GTP-binding SRP family. SRP54 subfamily. In terms of assembly, part of the signal recognition particle protein translocation system, which is composed of SRP and FtsY. Archaeal SRP consists of a 7S RNA molecule of 300 nucleotides and two protein subunits: SRP54 and SRP19.

It is found in the cytoplasm. It catalyses the reaction GTP + H2O = GDP + phosphate + H(+). Functionally, involved in targeting and insertion of nascent membrane proteins into the cytoplasmic membrane. Binds to the hydrophobic signal sequence of the ribosome-nascent chain (RNC) as it emerges from the ribosomes. The SRP-RNC complex is then targeted to the cytoplasmic membrane where it interacts with the SRP receptor FtsY. The chain is Signal recognition particle 54 kDa protein from Methanococcus maripaludis (strain DSM 14266 / JCM 13030 / NBRC 101832 / S2 / LL).